We begin with the raw amino-acid sequence, 209 residues long: Thymidine kinase (209 aa).

Residues 9 to 16 and 88 to 91 each bind ATP; these read SAMNAGKT and DEAQ. Catalysis depends on Glu-89, which acts as the Proton acceptor.

The protein belongs to the thymidine kinase family. Homotetramer.

The protein localises to the cytoplasm. The catalysed reaction is thymidine + ATP = dTMP + ADP + H(+). The chain is Thymidine kinase from Xanthomonas axonopodis pv. citri (strain 306).